The following is a 358-amino-acid chain: Methylthioribose-1-phosphate isomerase (358 aa).

Substrate is bound by residues 54-56 (RGA), Arg96, and Gln205. Residue Asp246 is the Proton donor of the active site. 256–257 (AK) is a substrate binding site.

This sequence belongs to the eIF-2B alpha/beta/delta subunits family. MtnA subfamily.

The enzyme catalyses 5-(methylsulfanyl)-alpha-D-ribose 1-phosphate = 5-(methylsulfanyl)-D-ribulose 1-phosphate. Its pathway is amino-acid biosynthesis; L-methionine biosynthesis via salvage pathway; L-methionine from S-methyl-5-thio-alpha-D-ribose 1-phosphate: step 1/6. Its function is as follows. Catalyzes the interconversion of methylthioribose-1-phosphate (MTR-1-P) into methylthioribulose-1-phosphate (MTRu-1-P). The polypeptide is Methylthioribose-1-phosphate isomerase (Pseudomonas entomophila (strain L48)).